Consider the following 152-residue polypeptide: 6,7-dimethyl-8-ribityllumazine synthase (152 aa).

Residues F21, 55–57 (AFE), and 79–81 (CVI) contribute to the 5-amino-6-(D-ribitylamino)uracil site. 84 to 85 (ST) is a (2S)-2-hydroxy-3-oxobutyl phosphate binding site. H87 functions as the Proton donor in the catalytic mechanism. Residue F112 coordinates 5-amino-6-(D-ribitylamino)uracil. A (2S)-2-hydroxy-3-oxobutyl phosphate-binding site is contributed by R126.

Belongs to the DMRL synthase family. In terms of assembly, forms an icosahedral capsid composed of 60 subunits, arranged as a dodecamer of pentamers.

It catalyses the reaction (2S)-2-hydroxy-3-oxobutyl phosphate + 5-amino-6-(D-ribitylamino)uracil = 6,7-dimethyl-8-(1-D-ribityl)lumazine + phosphate + 2 H2O + H(+). It functions in the pathway cofactor biosynthesis; riboflavin biosynthesis; riboflavin from 2-hydroxy-3-oxobutyl phosphate and 5-amino-6-(D-ribitylamino)uracil: step 1/2. In terms of biological role, catalyzes the formation of 6,7-dimethyl-8-ribityllumazine by condensation of 5-amino-6-(D-ribitylamino)uracil with 3,4-dihydroxy-2-butanone 4-phosphate. This is the penultimate step in the biosynthesis of riboflavin. The sequence is that of 6,7-dimethyl-8-ribityllumazine synthase from Staphylococcus saprophyticus subsp. saprophyticus (strain ATCC 15305 / DSM 20229 / NCIMB 8711 / NCTC 7292 / S-41).